The chain runs to 267 residues: Sorbitol-6-phosphate 2-dehydrogenase (267 aa).

9-38 is an NAD(+) binding site; the sequence is DNVIIVTGGASGIGLAIVDELLSQGAHVQM. S147 contributes to the substrate binding site. Y160 serves as the catalytic Proton acceptor.

It belongs to the short-chain dehydrogenases/reductases (SDR) family. As to quaternary structure, homotetramer.

It catalyses the reaction D-sorbitol 6-phosphate + NAD(+) = beta-D-fructose 6-phosphate + NADH + H(+). It participates in carbohydrate metabolism; D-sorbitol degradation; D-fructose 6-phosphate from D-sorbitol 6-phosphate: step 1/1. The sequence is that of Sorbitol-6-phosphate 2-dehydrogenase (sorD) from Klebsiella pneumoniae.